A 221-amino-acid chain; its full sequence is Fanconi anemia core complex-associated protein 24 (221 aa).

Belongs to the multisubunit FA complex composed of FANCA, FANCB, FANCC, FANCE, FANCF, FANCG, FANCL/PHF9, FANCM and FAAP24. Interacts with FANCM.

The protein localises to the nucleus. Plays a role in DNA repair through recruitment of the FA core complex to damaged DNA. Regulates FANCD2 monoubiquitination upon DNA damage. Induces chromosomal instability as well as hypersensitivity to DNA cross-linking agents, when repressed. Targets FANCM/FAAP24 complex to the DNA, preferentially to single strand DNA. This is Fanconi anemia core complex-associated protein 24 from Mus musculus (Mouse).